Reading from the N-terminus, the 93-residue chain is Small ribosomal subunit protein uS19 (93 aa).

The protein belongs to the universal ribosomal protein uS19 family.

Its function is as follows. Protein S19 forms a complex with S13 that binds strongly to the 16S ribosomal RNA. The protein is Small ribosomal subunit protein uS19 of Karelsulcia muelleri (strain GWSS) (Sulcia muelleri).